The chain runs to 989 residues: Presequence protease, mitochondrial (989 aa).

Residues Met1–Ala16 constitute a mitochondrion transit peptide. Residue His84 participates in Zn(2+) binding. The active-site Proton acceptor is the Glu87. Residue His88 coordinates Zn(2+). Glu160 is an active-site residue. A Zn(2+)-binding site is contributed by Glu185. Ser920 is modified (phosphoserine). Position 972–979 (Gly972–Thr979) interacts with ATP.

Belongs to the peptidase M16 family. PreP subfamily. Monomer and homodimer; homodimerization is induced by binding of the substrate. The cofactor is Zn(2+).

It is found in the mitochondrion intermembrane space. Its subcellular location is the mitochondrion matrix. With respect to regulation, activated by nucleotides, including ATP, GTP, CTP, UTP, and ADP. Activated by copper, manganese, calcium and magnesium ions; copper and manganese restore activity following inactivation by EDTA (ethylenediaminetetraacetic acid). Inhibited by metal chelators including EDTA, EGTA (ethylene glycol bis(2-aminoethyl)tetraacetic acid), and 1,10-phenanthroline. Inhibited by copper, zinc, and iron ions. Also inhibited by dithiothreitol p-mercuribenzenesulfonic acid, N-ethylmaleimide, protoporphyrin, hemin, protamine and triarginine. Degrades mitochondrial transit peptides after their cleavage in the intermembrane space or in the matrix, and presequence peptides; clearance of these peptides is required to keep the presequence processing machinery running. Preferentially cleaves the N-terminal side of paired basic amino acid residues. Also degrades other unstructured peptides. May function as an ATP-dependent peptidase as opposed to a metalloendopeptidase. The chain is Presequence protease, mitochondrial from Saccharomyces cerevisiae (strain ATCC 204508 / S288c) (Baker's yeast).